Consider the following 153-residue polypeptide: Insulin-like growth factor 1 (153 aa).

Residues 49-77 form a b region; it reads GPETLCGAELVDALQFVCGDRGFYFNKPT. 3 cysteine pairs are disulfide-bonded: Cys-54/Cys-96, Cys-66/Cys-109, and Cys-95/Cys-100. The interval 78–89 is c; sequence GYGSSSRRAPQT. The interval 90–110 is a; the sequence is GIVDECCFRSCDLRRLEMYCA. Residues 111–118 are d; sequence PLKPAKSA. Positions 119-153 are cleaved as a propeptide — e peptide; sequence RSVRAQRHTDMPKAQKEVHLKNASRGSAGNKNYRM. Positions 120–153 are disordered; sequence SVRAQRHTDMPKAQKEVHLKNASRGSAGNKNYRM. A compositionally biased stretch (basic and acidic residues) spans 125–138; the sequence is RHTDMPKAQKEVHL. A compositionally biased stretch (polar residues) spans 142–153; sequence SRGSAGNKNYRM.

It belongs to the insulin family. Forms a ternary complex with IGFR1 and ITGAV:ITGB3. Forms a ternary complex with IGFR1 and ITGA6:ITGB4. Forms a ternary complex with IGFBP3 and ALS.

Its subcellular location is the secreted. Functionally, the insulin-like growth factors, isolated from plasma, are structurally and functionally related to insulin but have a much higher growth-promoting activity. May be a physiological regulator of [1-14C]-2-deoxy-D-glucose (2DG) transport and glycogen synthesis in osteoblasts. Stimulates glucose transport in bone-derived osteoblastic (PyMS) cells and is effective at much lower concentrations than insulin, not only regarding glycogen and DNA synthesis but also with regard to enhancing glucose uptake. May play a role in synapse maturation. Ca(2+)-dependent exocytosis of IGF1 is required for sensory perception of smell in the olfactory bulb. Acts as a ligand for IGF1R. Binds to the alpha subunit of IGF1R, leading to the activation of the intrinsic tyrosine kinase activity which autophosphorylates tyrosine residues in the beta subunit thus initiating a cascade of down-stream signaling events leading to activation of the PI3K-AKT/PKB and the Ras-MAPK pathways. Binds to integrins ITGAV:ITGB3 and ITGA6:ITGB4. Its binding to integrins and subsequent ternary complex formation with integrins and IGFR1 are essential for IGF1 signaling. Induces the phosphorylation and activation of IGFR1, MAPK3/ERK1, MAPK1/ERK2 and AKT1. As part of the MAPK/ERK signaling pathway, acts as a negative regulator of apoptosis in cardiomyocytes via promotion of STUB1/CHIP-mediated ubiquitination and degradation of ICER-type isoforms of CREM. This Ailuropoda melanoleuca (Giant panda) protein is Insulin-like growth factor 1.